Here is a 669-residue protein sequence, read N- to C-terminus: Glutaminase kidney isoform, mitochondrial (669 aa).

The N-terminal 54 residues, 1-54 (MMRLRGSGMLRDLLLRSPAGVSATLRRAQPLVTLCRRPRGGGRPAAGPAAAARL), are a transit peptide targeting the mitochondrion. The tract at residues 68–118 (LARGLSSSPSEILQELGKGSTHPQPGVSPPAAPAAPGPKDGPGETDAFGNS) is disordered. Residues 93-103 (GVSPPAAPAAP) are compositionally biased toward pro residues. 2 positions are modified to N6-succinyllysine: Lys130 and Lys164. Ser286 contributes to the substrate binding site. N6-acetyllysine is present on Lys311. A highly mobile activation loop region spans residues 315 to 322 (GLRFNKLF). Asn335, Glu381, Asn388, Tyr414, Tyr466, and Val484 together coordinate substrate. ANK repeat units lie at residues 585 to 614 (DSRT…VNPF) and 619 to 648 (WNNT…QYTP). The disordered stretch occupies residues 647-669 (TPQGDSDNGKENQTVHKNLDGLL). Ser652 is modified (phosphoserine). Basic and acidic residues predominate over residues 653-669 (DNGKENQTVHKNLDGLL).

The protein belongs to the glutaminase family. As to quaternary structure, homotetramer, dimer of dimers. The tetramers can assemble into rod-like oligomers (in vitro), but the physiological significance of this is not clear. Interacts with RAF1 and MAP2K2. Interacts with ATCAY; the interaction is direct and may control GLS localization, negatively regulating its activity. Post-translationally, synthesized as a 74-kDa cytosolic precursor which is proteolytically processed by the mitochondrial-processing peptidase (MPP) via a 72-kDa intermediate to yield the mature mitochondrial 68- and 65-kDa subunits. In terms of tissue distribution, isoform 1 and isoform 3 are detected in brain cortex. Isoform 3 is highly expressed in astrocytoma, ganglioglioma and ependymoma. Isoform 1 is highly expressed in brain and kidney, but not detected in liver. Isoform 3 is highly expressed in heart and pancreas, detected at lower levels in placenta, lung, pancreas and kidney, but is not detected in liver. Isoform 2 is expressed in cardiac and skeletal muscle.

The protein resides in the mitochondrion. Its subcellular location is the cytoplasm. It localises to the cytosol. It is found in the mitochondrion matrix. The enzyme catalyses L-glutamine + H2O = L-glutamate + NH4(+). With respect to regulation, isoform 1 and isoform 3 are activated by phosphate. Inhibited by BPTES. BPTES binds between subunits and favors dissociation of the tetramer into dimers. Inhibited by 6-diazo-5-oxo-L-norleucine (DON). Enzyme activity is stimulated by phosphorylation. Catalyzes the first reaction in the primary pathway for the renal catabolism of glutamine. Plays a role in maintaining acid-base homeostasis. Regulates the levels of the neurotransmitter glutamate, the main excitatory neurotransmitter in the brain. In terms of biological role, lacks catalytic activity. The chain is Glutaminase kidney isoform, mitochondrial (GLS) from Homo sapiens (Human).